Reading from the N-terminus, the 131-residue chain is UPF0102 protein YraN (131 aa).

Over residues 1 to 19 the composition is skewed to polar residues; it reads MATVPTRSGSPRQLTTKQT. The disordered stretch occupies residues 1–20; sequence MATVPTRSGSPRQLTTKQTG.

The protein belongs to the UPF0102 family.

The sequence is that of UPF0102 protein YraN from Shigella boydii serotype 18 (strain CDC 3083-94 / BS512).